The sequence spans 207 residues: Outer-membrane lipoprotein carrier protein (207 aa).

Residues 1–21 form the signal peptide; it reads MRAIRMLLVSALTLGSVTAYA.

This sequence belongs to the LolA family. As to quaternary structure, monomer.

The protein resides in the periplasm. Participates in the translocation of lipoproteins from the inner membrane to the outer membrane. Only forms a complex with a lipoprotein if the residue after the N-terminal Cys is not an aspartate (The Asp acts as a targeting signal to indicate that the lipoprotein should stay in the inner membrane). This chain is Outer-membrane lipoprotein carrier protein, found in Pseudomonas putida (strain ATCC 47054 / DSM 6125 / CFBP 8728 / NCIMB 11950 / KT2440).